We begin with the raw amino-acid sequence, 355 residues long: WAT1-related protein At1g25270 (355 aa).

Transmembrane regions (helical) follow at residues 4 to 24 (VVAMVAVQFIFAGMFILFKIT), 33 to 53 (VLVAYRLSFATIFMLPLALIF), 65 to 85 (LLLLAFVSGLLGAAIPNILYL), 94 to 114 (TFSAASSIISPLITLVLGLVF), 134 to 154 (LLGACGALVFVFYKGIEIHIW), 175 to 195 (VSILGVLMVLGSNVSTSLWLL), 207 to 227 (LYWNTSLMNGVGSLVCVIIAL), 244 to 264 (LLATLYSGIVVSGMVVPLVAW), 272 to 292 (LFVTVFSPIRLVIVALIGSFA), and 297 to 317 (LHLGSIIGAMIMVGGVYLVVW). Positions 12–142 (FIFAGMFILF…TLLGACGALV (131 aa)) constitute an EamA 1 domain. Residues 210 to 316 (NTSLMNGVGS…IMVGGVYLVV (107 aa)) enclose the EamA 2 domain.

Belongs to the drug/metabolite transporter (DMT) superfamily. Plant drug/metabolite exporter (P-DME) (TC 2.A.7.4) family.

The protein resides in the membrane. The polypeptide is WAT1-related protein At1g25270 (Arabidopsis thaliana (Mouse-ear cress)).